The primary structure comprises 116 residues: Somatostatin (116 aa).

The first 24 residues, methionine 1–alanine 24, serve as a signal peptide directing secretion. The propeptide occupies alanine 25 to arginine 88. Positions proline 60–valine 82 are disordered. A compositionally biased stretch (basic and acidic residues) spans aspartate 72–valine 82. Cysteine 105 and cysteine 116 are joined by a disulfide.

The protein belongs to the somatostatin family.

Its subcellular location is the secreted. Somatostatin inhibits the release of somatotropin. The chain is Somatostatin (SST) from Gallus gallus (Chicken).